A 286-amino-acid polypeptide reads, in one-letter code: 2-hydroxy-6-oxo-6-phenylhexa-2,4-dienoate hydrolase (286 aa).

Residues 42 to 43, Asn51, Asn111, Ser180, and Arg190 contribute to the substrate site; that span reads GG. His265 serves as the catalytic Proton acceptor. A substrate-binding site is contributed by Trp266.

This sequence belongs to the AB hydrolase superfamily. BphD family. As to quaternary structure, homodimer.

The enzyme catalyses 2,6-dioxo-6-phenylhexa-3-enoate + H2O = 2-oxopent-4-enoate + benzoate + H(+). It functions in the pathway xenobiotic degradation; biphenyl degradation; 2-hydroxy-2,4-pentadienoate and benzoate from biphenyl: step 4/4. With respect to regulation, inhibited by 3-Cl HOPDA. Functionally, catalyzes an unusual C-C bond hydrolysis of 2-hydroxy-6-oxo-6-phenylhexa-2,4-dienoic acid (HOPDA) to produce benzoic acid and 2-hydroxy-2,4-pentadienoic acid (HPD). The polypeptide is 2-hydroxy-6-oxo-6-phenylhexa-2,4-dienoate hydrolase (bphD) (Paraburkholderia xenovorans (strain LB400)).